The following is a 258-amino-acid chain: tRNA pseudouridine synthase A (258 aa).

Asp-53 acts as the Nucleophile in catalysis. Residue Tyr-111 coordinates substrate.

The protein belongs to the tRNA pseudouridine synthase TruA family. As to quaternary structure, homodimer.

The enzyme catalyses uridine(38/39/40) in tRNA = pseudouridine(38/39/40) in tRNA. Formation of pseudouridine at positions 38, 39 and 40 in the anticodon stem and loop of transfer RNAs. This Streptococcus agalactiae serotype Ia (strain ATCC 27591 / A909 / CDC SS700) protein is tRNA pseudouridine synthase A.